The chain runs to 209 residues: Large ribosomal subunit protein uL3 (209 aa).

Gln-150 carries the post-translational modification N5-methylglutamine.

It belongs to the universal ribosomal protein uL3 family. Part of the 50S ribosomal subunit. Forms a cluster with proteins L14 and L19. In terms of processing, methylated by PrmB.

Its function is as follows. One of the primary rRNA binding proteins, it binds directly near the 3'-end of the 23S rRNA, where it nucleates assembly of the 50S subunit. The sequence is that of Large ribosomal subunit protein uL3 from Proteus mirabilis (strain HI4320).